The following is an 867-amino-acid chain: Rifampicin phosphotransferase (867 aa).

Positions 1-314 (MKPYVLKFQE…FYIVQSRPIT (314 aa)) are ATP-binding. 8 residues coordinate ATP: K22, R117, G132, T136, Q183, E297, Q309, and R311. Positions 327–754 (NRVYISVAHQ…TSDGEMINGE (428 aa)) are rifampicin-binding. 2 residues coordinate rifampicin: Q336 and Y351. The segment at 767–865 (GLPVSSGTVE…INGTEGYIEI (99 aa)) is swivel phosphohistidine. H825 serves as the catalytic Tele-phosphohistidine intermediate.

Belongs to the rifampicin phosphotransferase family.

The enzyme catalyses rifampicin + ATP + H2O = 21-phosphorifampicin + AMP + phosphate + 2 H(+). Functionally, catalyzes the phosphorylation of rifampicin, also known as rifampin (RIF), leading to its inactivation. Confers high level resistance to a variety of clinically used rifamycin antibiotics. Does not show phosphoenolpyruvate (PEP) synthase activity. The sequence is that of Rifampicin phosphotransferase from Listeria monocytogenes serotype 4b (strain F2365).